Reading from the N-terminus, the 613-residue chain is MPPLRSRTTTAGRNAAGARALWRATGLTDSDFGKPIVAIANSYTQFVPGHVHLKDVGEIVAEAVRAAGGVPREFHTIAVDDGIAMGHGGMLYSLPSREIIADSVEYMVNAHTADALVCISNCDKITPGMLNAAMRLNIPTVFVSGGPMEAGKAVVVGGVAQAPTDLITAISASANSSVTDEGLSEVERSACPTCGSCSGMFTANSMNCLTEALGLALPGNGSTLATHAARRALFEKAGRVVVDIANRWYREDDASVLPRNVANAKAFRNAMALDVAMGGSTNTVLHTLAAAQEGEIDFDLETIDEISRKVPCLSKVSPNSDYHMEDVHRAGGIPAILGELRRAGLLHTDVTTVHTPTLEEWLDTWDIRSGKASAEAIELFHAAPGGVRTTEPFSTDNRWSSLDTDAAGGCIRDKEHAYTVEGGLVVLRGNIAPDGAILKTAGIDEDLFSFQGPAVVVESQEEAVSVILGKKIKPGDVLVVRYEGPAGGPGMQEMLHPTAFLKGAGLGKQCALITDGRFSGGTSGLSIGHISPEAASGGVIGLVENGDQIRIDVATRTLEVLVDDAVLAERRAKMEASERPWQPVDRDRTVTTALRAYAALATSADKGAVRRVP.

D81 contacts Mg(2+). C122 is a binding site for [2Fe-2S] cluster. Mg(2+)-binding residues include D123 and K124. At K124 the chain carries N6-carboxylysine. A [2Fe-2S] cluster-binding site is contributed by C197. E493 is a binding site for Mg(2+). S519 serves as the catalytic Proton acceptor.

The protein belongs to the IlvD/Edd family. As to quaternary structure, homodimer. [2Fe-2S] cluster serves as cofactor. Mg(2+) is required as a cofactor.

It catalyses the reaction (2R)-2,3-dihydroxy-3-methylbutanoate = 3-methyl-2-oxobutanoate + H2O. The catalysed reaction is (2R,3R)-2,3-dihydroxy-3-methylpentanoate = (S)-3-methyl-2-oxopentanoate + H2O. It functions in the pathway amino-acid biosynthesis; L-isoleucine biosynthesis; L-isoleucine from 2-oxobutanoate: step 3/4. Its pathway is amino-acid biosynthesis; L-valine biosynthesis; L-valine from pyruvate: step 3/4. Functionally, functions in the biosynthesis of branched-chain amino acids. Catalyzes the dehydration of (2R,3R)-2,3-dihydroxy-3-methylpentanoate (2,3-dihydroxy-3-methylvalerate) into 2-oxo-3-methylpentanoate (2-oxo-3-methylvalerate) and of (2R)-2,3-dihydroxy-3-methylbutanoate (2,3-dihydroxyisovalerate) into 2-oxo-3-methylbutanoate (2-oxoisovalerate), the penultimate precursor to L-isoleucine and L-valine, respectively. The protein is Dihydroxy-acid dehydratase 3 of Nocardia farcinica (strain IFM 10152).